A 461-amino-acid chain; its full sequence is Phytase A (461 aa).

Cys22 and Cys31 are oxidised to a cystine. The 1D-myo-inositol hexakisphosphate site is built by Gln41, Tyr42, Arg71, His72, Arg75, and Thr78. 4 disulfides stabilise this stretch: Cys61–Cys405, Cys205–Cys456, Cys254–Cys272, and Cys427–Cys435. Catalysis depends on His72, which acts as the Nucleophile. N-linked (GlcNAc...) asparagine glycans are attached at residues Asn95 and Asn110. Residue Arg155 participates in 1D-myo-inositol hexakisphosphate binding. Residue Asn197 is glycosylated (N-linked (GlcNAc...) asparagine). Lys291 is a binding site for 1D-myo-inositol hexakisphosphate. 2 N-linked (GlcNAc...) asparagine glycosylation sites follow: Asn329 and Asn343. 1D-myo-inositol hexakisphosphate-binding residues include His352 and Asp353. Asn367 carries N-linked (GlcNAc...) asparagine glycosylation.

The protein belongs to the histidine acid phosphatase family. Monomer. Post-translationally, glycosylated.

Its subcellular location is the secreted. It catalyses the reaction 1D-myo-inositol hexakisphosphate + H2O = 1D-myo-inositol 1,2,4,5,6-pentakisphosphate + phosphate. The enzyme catalyses 1D-myo-inositol 1,2,4,5,6-pentakisphosphate + H2O = 1D-myo-inositol 1,2,5,6-tetrakisphosphate + phosphate. The catalysed reaction is 1D-myo-inositol 1,2,5,6-tetrakisphosphate + H2O = 1D-myo-inositol 1,2,6-trisphosphate + phosphate. It carries out the reaction 1D-myo-inositol 1,2,6-trisphosphate + H2O = 1D-myo-inositol 1,2-bisphosphate + phosphate. It catalyses the reaction 1D-myo-inositol 1,2-bisphosphate + H2O = 1D-myo-inositol 2-phosphate + phosphate. Catalyzes the phosphate monoester hydrolysis of phytic acid (myo-inositol hexakisphosphate), which results in the stepwise formation of myo-inositol pentakis-, tetrakis-, tris-, bis-, and monophosphates, as well as the liberation of inorganic phosphate. Myo-inositol 2-monophosphate is the end product. The polypeptide is Phytase A (Penicillium oxalicum).